Reading from the N-terminus, the 453-residue chain is Acyl-coenzyme A thioesterase 2, mitochondrial (453 aa).

The transit peptide at 1–42 directs the protein to the mitochondrion; the sequence is MVASSFAVLRASRLCQQDWKSWARLFVPPPLSTGGRTTWART. N6-acetyllysine is present on lysine 83. Catalysis depends on charge relay system residues serine 273, aspartate 365, and histidine 399. Lysine 447 is modified (N6-succinyllysine).

The protein belongs to the C/M/P thioester hydrolase family. In terms of assembly, monomer. In terms of tissue distribution, highly expressed in brown and white adipose tissue, muscle, heart, kidney, lung, adrenal gland and spleen; weakly expressed in intestine, testis and brain.

It localises to the mitochondrion matrix. The catalysed reaction is hexadecanoyl-CoA + H2O = hexadecanoate + CoA + H(+). It carries out the reaction tetradecanoyl-CoA + H2O = tetradecanoate + CoA + H(+). The enzyme catalyses octadecanoyl-CoA + H2O = octadecanoate + CoA + H(+). It catalyses the reaction eicosanoyl-CoA + H2O = eicosanoate + CoA + H(+). The catalysed reaction is decanoyl-CoA + H2O = decanoate + CoA + H(+). It carries out the reaction dodecanoyl-CoA + H2O = dodecanoate + CoA + H(+). The enzyme catalyses (9Z)-octadecenoyl-CoA + H2O = (9Z)-octadecenoate + CoA + H(+). It catalyses the reaction (9Z)-hexadecenoyl-CoA + H2O = (9Z)-hexadecenoate + CoA + H(+). The catalysed reaction is (9E)-octadecenoyl-CoA + H2O = (9E)-octadecenoate + CoA + H(+). It carries out the reaction (9Z,12Z)-octadecadienoyl-CoA + H2O = (9Z,12Z)-octadecadienoate + CoA + H(+). It participates in lipid metabolism; fatty acid metabolism. Its function is as follows. Catalyzes the hydrolysis of acyl-CoAs into free fatty acids and coenzyme A (CoASH), regulating their respective intracellular levels. Displays higher activity toward long chain acyl CoAs (C14-C20). The enzyme is involved in enhancing the hepatic fatty acid oxidation in mitochondria. The chain is Acyl-coenzyme A thioesterase 2, mitochondrial (Acot2) from Mus musculus (Mouse).